The primary structure comprises 489 residues: Betaine aldehyde dehydrogenase (489 aa).

The K(+) site is built by Thr-26 and Asp-93. Gly-150–Trp-152 is a binding site for NAD(+). Lys-162 acts as the Charge relay system in catalysis. NAD(+) is bound at residue Lys-176–Glu-179. Residue Val-180 coordinates K(+). Gly-229–Thr-232 serves as a coordination point for NAD(+). Leu-245 contributes to the K(+) binding site. Glu-251 serves as the catalytic Proton acceptor. Residues Gly-253, Cys-285, and Glu-386 each contribute to the NAD(+) site. Cys-285 (nucleophile) is an active-site residue. Residue Cys-285 is modified to Cysteine sulfenic acid (-SOH). K(+) is bound by residues Lys-456 and Gly-459. Residue Glu-463 is the Charge relay system of the active site.

This sequence belongs to the aldehyde dehydrogenase family. Dimer of dimers. Requires K(+) as cofactor.

It carries out the reaction betaine aldehyde + NAD(+) + H2O = glycine betaine + NADH + 2 H(+). It participates in amine and polyamine biosynthesis; betaine biosynthesis via choline pathway; betaine from betaine aldehyde: step 1/1. In terms of biological role, involved in the biosynthesis of the osmoprotectant glycine betaine. Catalyzes the irreversible oxidation of betaine aldehyde to the corresponding acid. This chain is Betaine aldehyde dehydrogenase, found in Burkholderia ambifaria (strain MC40-6).